Consider the following 291-residue polypeptide: Bis(5'-nucleosyl)-tetraphosphatase, symmetrical (291 aa).

It belongs to the Ap4A hydrolase family.

The enzyme catalyses P(1),P(4)-bis(5'-adenosyl) tetraphosphate + H2O = 2 ADP + 2 H(+). In terms of biological role, hydrolyzes diadenosine 5',5'''-P1,P4-tetraphosphate to yield ADP. The protein is Bis(5'-nucleosyl)-tetraphosphatase, symmetrical of Coxiella burnetii (strain CbuG_Q212) (Coxiella burnetii (strain Q212)).